A 108-amino-acid polypeptide reads, in one-letter code: uncharacterized protein (108 aa).

N-linked (GlcNAc...) asparagine glycosylation is present at Asn-33.

N-glycosylated.

This is an uncharacterized protein from Saccharomyces cerevisiae (strain ATCC 204508 / S288c) (Baker's yeast).